The sequence spans 239 residues: Uridylate kinase (239 aa).

ATP is bound at residue 13 to 16; it reads KISG. Residue G55 participates in UMP binding. ATP-binding residues include G56 and R60. UMP-binding positions include D75 and 136–143; that span reads LGIPFFTT. ATP contacts are provided by T163, Y169, and D172.

This sequence belongs to the UMP kinase family. In terms of assembly, homohexamer.

Its subcellular location is the cytoplasm. The enzyme catalyses UMP + ATP = UDP + ADP. The protein operates within pyrimidine metabolism; CTP biosynthesis via de novo pathway; UDP from UMP (UMPK route): step 1/1. Inhibited by UTP. In terms of biological role, catalyzes the reversible phosphorylation of UMP to UDP. This Buchnera aphidicola subsp. Cinara cedri (strain Cc) protein is Uridylate kinase.